Here is a 99-residue protein sequence, read N- to C-terminus: uncharacterized protein (99 aa).

The protein belongs to the HesB/IscA family.

This is an uncharacterized protein from Staphylococcus haemolyticus (strain JCSC1435).